The primary structure comprises 435 residues: Methylenetetrahydrofolate--tRNA-(uracil-5-)-methyltransferase TrmFO (435 aa).

FAD is bound at residue 9–14 (GAGLAG).

It belongs to the MnmG family. TrmFO subfamily. The cofactor is FAD.

Its subcellular location is the cytoplasm. It catalyses the reaction uridine(54) in tRNA + (6R)-5,10-methylene-5,6,7,8-tetrahydrofolate + NADH + H(+) = 5-methyluridine(54) in tRNA + (6S)-5,6,7,8-tetrahydrofolate + NAD(+). The catalysed reaction is uridine(54) in tRNA + (6R)-5,10-methylene-5,6,7,8-tetrahydrofolate + NADPH + H(+) = 5-methyluridine(54) in tRNA + (6S)-5,6,7,8-tetrahydrofolate + NADP(+). Functionally, catalyzes the folate-dependent formation of 5-methyl-uridine at position 54 (M-5-U54) in all tRNAs. The sequence is that of Methylenetetrahydrofolate--tRNA-(uracil-5-)-methyltransferase TrmFO from Staphylococcus aureus (strain JH1).